The following is a 49-amino-acid chain: Large ribosomal subunit protein bL33 (49 aa).

The protein belongs to the bacterial ribosomal protein bL33 family.

The polypeptide is Large ribosomal subunit protein bL33 (Syntrophotalea carbinolica (strain DSM 2380 / NBRC 103641 / GraBd1) (Pelobacter carbinolicus)).